Here is a 617-residue protein sequence, read N- to C-terminus: tRNA-dihydrouridine(47) synthase [NAD(P)(+)] (617 aa).

The C3H1-type zinc-finger motif lies at 42-70 (KENNALCPAISIGNECPYKENCKFPHDVE). Residues 160–193 (EEKPDPSSKVSNIPEENRDATSAISEGKETESVS) form a disordered region. FMN contacts are provided by residues 245 to 247 (PLT) and Q308. The Proton donor role is filled by C340. FMN contacts are provided by residues K380, H411, 460–462 (NGD), and 483–484 (AR).

Belongs to the Dus family. Dus3 subfamily. FMN serves as cofactor.

The protein resides in the cytoplasm. Its subcellular location is the nucleus. The enzyme catalyses 5,6-dihydrouridine(47) in tRNA + NAD(+) = uridine(47) in tRNA + NADH + H(+). It catalyses the reaction 5,6-dihydrouridine(47) in tRNA + NADP(+) = uridine(47) in tRNA + NADPH + H(+). It carries out the reaction a 5,6-dihydrouridine in mRNA + NAD(+) = a uridine in mRNA + NADH + H(+). The catalysed reaction is a 5,6-dihydrouridine in mRNA + NADP(+) = a uridine in mRNA + NADPH + H(+). Functionally, catalyzes the synthesis of dihydrouridine, a modified base, in various RNAs, such as tRNAs and mRNAs. Modifies the uridine in position 47 (U47) in the D-loop of tRNAs. Also able to mediate formation of dihydrouridine outside of the D-loop of tRNAs. Catalyzes the synthesis of dihydrouridine in some mRNAs, thereby affecting their translation. Dus3-mediated dihydrouridylation of the mRNA encoding alpha-tubulin nda2 is required for meiotic chromosome segregation. This chain is tRNA-dihydrouridine(47) synthase [NAD(P)(+)], found in Schizosaccharomyces pombe (strain 972 / ATCC 24843) (Fission yeast).